Consider the following 155-residue polypeptide: Small ribosomal subunit protein uS7cz/uS7cy (155 aa).

The protein belongs to the universal ribosomal protein uS7 family. Part of the 30S ribosomal subunit.

Its subcellular location is the plastid. It localises to the chloroplast. In terms of biological role, one of the primary rRNA binding proteins, it binds directly to 16S rRNA where it nucleates assembly of the head domain of the 30S subunit. The sequence is that of Small ribosomal subunit protein uS7cz/uS7cy (rps7-A) from Nymphaea alba (White water-lily).